A 158-amino-acid chain; its full sequence is SsrA-binding protein (158 aa).

Residues 133-147 (KRQALRERQDNREAQ) are compositionally biased toward basic and acidic residues. The disordered stretch occupies residues 133-158 (KRQALRERQDNREAQRAMASRKHLGE).

Belongs to the SmpB family.

The protein resides in the cytoplasm. Required for rescue of stalled ribosomes mediated by trans-translation. Binds to transfer-messenger RNA (tmRNA), required for stable association of tmRNA with ribosomes. tmRNA and SmpB together mimic tRNA shape, replacing the anticodon stem-loop with SmpB. tmRNA is encoded by the ssrA gene; the 2 termini fold to resemble tRNA(Ala) and it encodes a 'tag peptide', a short internal open reading frame. During trans-translation Ala-aminoacylated tmRNA acts like a tRNA, entering the A-site of stalled ribosomes, displacing the stalled mRNA. The ribosome then switches to translate the ORF on the tmRNA; the nascent peptide is terminated with the 'tag peptide' encoded by the tmRNA and targeted for degradation. The ribosome is freed to recommence translation, which seems to be the essential function of trans-translation. In Leifsonia xyli subsp. xyli (strain CTCB07), this protein is SsrA-binding protein.